A 456-amino-acid chain; its full sequence is GTPase Der (456 aa).

EngA-type G domains follow at residues 4–169 (PVVA…PSKD) and 178–353 (VQLA…DQSR). GTP is bound by residues 10–17 (GRPNVGKS), 57–61 (DTGGL), 120–123 (NKCE), 184–191 (GRPNVGKS), 231–235 (DTAGI), and 296–299 (NKWD). In terms of domain architecture, KH-like spans 354–439 (RRVTTSVVNE…PIKLFWRGKQ (86 aa)).

Belongs to the TRAFAC class TrmE-Era-EngA-EngB-Septin-like GTPase superfamily. EngA (Der) GTPase family. As to quaternary structure, associates with the 50S ribosomal subunit.

In terms of biological role, GTPase that plays an essential role in the late steps of ribosome biogenesis. In Prochlorococcus marinus (strain NATL2A), this protein is GTPase Der.